The primary structure comprises 469 residues: Ribulose bisphosphate carboxylase large chain (469 aa).

Residues 1–2 (MS) constitute a propeptide that is removed on maturation. Position 3 is an N-acetylproline (Pro-3). N6,N6,N6-trimethyllysine is present on Lys-14. The substrate site is built by Asn-123 and Thr-173. The active-site Proton acceptor is Lys-175. Lys-177 contacts substrate. The Mg(2+) site is built by Lys-201, Asp-203, and Glu-204. Lys-201 is subject to N6-carboxylysine. His-294 acts as the Proton acceptor in catalysis. Residues Arg-295, His-327, and Ser-379 each coordinate substrate.

The protein belongs to the RuBisCO large chain family. Type I subfamily. As to quaternary structure, heterohexadecamer of 8 large chains and 8 small chains; disulfide-linked. The disulfide link is formed within the large subunit homodimers. Mg(2+) is required as a cofactor. The disulfide bond which can form in the large chain dimeric partners within the hexadecamer appears to be associated with oxidative stress and protein turnover.

The protein localises to the plastid. It localises to the chloroplast. The enzyme catalyses 2 (2R)-3-phosphoglycerate + 2 H(+) = D-ribulose 1,5-bisphosphate + CO2 + H2O. It catalyses the reaction D-ribulose 1,5-bisphosphate + O2 = 2-phosphoglycolate + (2R)-3-phosphoglycerate + 2 H(+). Its function is as follows. RuBisCO catalyzes two reactions: the carboxylation of D-ribulose 1,5-bisphosphate, the primary event in carbon dioxide fixation, as well as the oxidative fragmentation of the pentose substrate in the photorespiration process. Both reactions occur simultaneously and in competition at the same active site. The protein is Ribulose bisphosphate carboxylase large chain of Brexia madagascariensis.